A 295-amino-acid polypeptide reads, in one-letter code: MILRRRGIVLSFHSNMVTVEDEETGERLLCKLRGKFRLQNLKIYVGDRVEYTPDGTGSGVIENVLHRKNLLVKPHVANVDQAILVVTVKMPETSTYIIDKFLVLTEKNELETVLVINKMDIYDEEDLEKVKELERIYSKLYPIVKTSAKTGMGIEELKKYLKGKISTMAGLSGVGKSSLLNAINPGLKLRVSEVSQKLQRGRHTTTSAQLLRFDFGGYVVDTPGFANLEIGDIEPEELKYYFKEFNEKQCFFSDCNHIDEPECGVKEAVENGEIAESRYENYVKMFHELLGRGKS.

The region spanning 68–228 (KNLLVKPHVA…VVDTPGFANL (161 aa)) is the CP-type G domain. Residues 117 to 120 (NKMD) and 170 to 178 (GLSGVGKSS) contribute to the GTP site. Residues cysteine 250, cysteine 255, histidine 257, and cysteine 263 each contribute to the Zn(2+) site.

This sequence belongs to the TRAFAC class YlqF/YawG GTPase family. RsgA subfamily. In terms of assembly, monomer. Associates with 30S ribosomal subunit, binds 16S rRNA. It depends on Zn(2+) as a cofactor.

The protein localises to the cytoplasm. One of several proteins that assist in the late maturation steps of the functional core of the 30S ribosomal subunit. Helps release RbfA from mature subunits. May play a role in the assembly of ribosomal proteins into the subunit. Circularly permuted GTPase that catalyzes slow GTP hydrolysis, GTPase activity is stimulated by the 30S ribosomal subunit. The polypeptide is Small ribosomal subunit biogenesis GTPase RsgA (Thermotoga neapolitana (strain ATCC 49049 / DSM 4359 / NBRC 107923 / NS-E)).